Reading from the N-terminus, the 407-residue chain is Immunoglobulin superfamily member 5 (407 aa).

Over 1–266 the chain is Extracellular; sequence MGQKERSTAD…LGFSLPTWGK (266 aa). 2 Ig-like V-type domains span residues 39–139 and 142–231; these read NEVI…LTVQ and GELF…ATVN. N-linked (GlcNAc...) asparagine glycosylation is found at Asn59, Asn103, Asn210, and Asn231. Cystine bridges form between Cys60–Cys123 and Cys163–Cys215. The helical transmembrane segment at 267-285 threads the bilayer; it reads VGLGLAGTMLLTPTCTLTI. Topologically, residues 286-407 are cytoplasmic; that stretch reads RCCCCRRRCC…PEKVSNTTVV (122 aa). The span at 320–331 shows a compositional bias: basic and acidic residues; the sequence is KSEKEKTNKETE. Residues 320-407 form a disordered region; it reads KSEKEKTNKE…PEKVSNTTVV (88 aa). Over residues 389-407 the composition is skewed to polar residues; it reads PQASFNLASPEKVSNTTVV.

It belongs to the immunoglobulin superfamily. Interacts with MAGI1 at tight junctions, forms a tripartite complex with NPHS1. Interacts with LNX1 isoform 2 via its PDZ 2 domain, it may also interact with other isoforms containing this domain.

The protein localises to the apical cell membrane. It is found in the cell junction. It localises to the tight junction. Its function is as follows. Provides, together with MAGI1, an adhesion machinery at tight junctions, which may regulate the permeability of kidney glomerulus and small intestinal epithelial cells. Mediates calcium-independent homophilic cell adhesion. In testis, it may function as a cell adhesion molecule rather than a tight-junction protein. It may participate in the adhesion between spermatogonia-spermatogonia, spermatogonia-Sertoli cells, and Sertoli cells-Sertoli cells. The chain is Immunoglobulin superfamily member 5 (IGSF5) from Homo sapiens (Human).